Here is a 309-residue protein sequence, read N- to C-terminus: Tagatose-6-phosphate kinase (309 aa).

It belongs to the carbohydrate kinase PfkB family. LacC subfamily.

It carries out the reaction D-tagatofuranose 6-phosphate + ATP = D-tagatofuranose 1,6-bisphosphate + ADP + H(+). It functions in the pathway carbohydrate metabolism; D-tagatose 6-phosphate degradation; D-glyceraldehyde 3-phosphate and glycerone phosphate from D-tagatose 6-phosphate: step 1/2. The protein is Tagatose-6-phosphate kinase of Streptococcus pyogenes serotype M4 (strain MGAS10750).